A 365-amino-acid polypeptide reads, in one-letter code: Casein kinase I homolog hhp1 (365 aa).

One can recognise a Protein kinase domain in the interval 11–279 (YRIGRKIGSG…YLRKLFRDLF (269 aa)). ATP-binding positions include 17 to 25 (IGSGSFGDI) and Lys-40. Catalysis depends on Asp-130, which acts as the Proton acceptor. Residues 301 to 311 (DQQHQQQLQQQ) are compositionally biased toward low complexity. The tract at residues 301–365 (DQQHQQQLQQ…TGAQYINRPN (65 aa)) is disordered. Positions 343-365 (INTTVPVINDPSATGAQYINRPN) are enriched in polar residues.

Belongs to the protein kinase superfamily. CK1 Ser/Thr protein kinase family. Casein kinase I subfamily.

The protein localises to the nucleus. It catalyses the reaction L-seryl-[protein] + ATP = O-phospho-L-seryl-[protein] + ADP + H(+). The enzyme catalyses L-threonyl-[protein] + ATP = O-phospho-L-threonyl-[protein] + ADP + H(+). Involved in DNA repair. Has a probable role in repairing alkylated DNA and may regulate the activity of protein(s) involved in double strand break repair caused by gamma rays. The protein is Casein kinase I homolog hhp1 (hhp1) of Schizosaccharomyces pombe (strain 972 / ATCC 24843) (Fission yeast).